The sequence spans 344 residues: SUMO-activating enzyme subunit 1 (344 aa).

The protein belongs to the ubiquitin-activating E1 family. Heterodimer of sae1 and uba2/sae2. The heterodimer corresponds to the two domains that are encoded on a single polypeptide chain in ubiquitin-activating enzyme E1. Interacts with ube2i.

The protein localises to the nucleus. The protein operates within protein modification; protein sumoylation. The heterodimer acts as an E1 ligase for sumo1, sumo2, and sumo3. It mediates ATP-dependent activation of sumo proteins followed by formation of a thioester bond between a sumo protein and a conserved active site cysteine residue on uba2/sae2. In Xenopus laevis (African clawed frog), this protein is SUMO-activating enzyme subunit 1 (sae1).